A 271-amino-acid polypeptide reads, in one-letter code: uncharacterized protein (271 aa).

Belongs to the HAD-like hydrolase superfamily.

This is an uncharacterized protein from Staphylococcus aureus (strain Mu50 / ATCC 700699).